The following is a 477-amino-acid chain: Glycogen synthase 1 (477 aa).

Residue lysine 15 coordinates ADP-alpha-D-glucose.

This sequence belongs to the glycosyltransferase 1 family. Bacterial/plant glycogen synthase subfamily.

The enzyme catalyses [(1-&gt;4)-alpha-D-glucosyl](n) + ADP-alpha-D-glucose = [(1-&gt;4)-alpha-D-glucosyl](n+1) + ADP + H(+). It functions in the pathway glycan biosynthesis; glycogen biosynthesis. In terms of biological role, synthesizes alpha-1,4-glucan chains using ADP-glucose. The protein is Glycogen synthase 1 (glgA1) of Synechocystis sp. (strain ATCC 27184 / PCC 6803 / Kazusa).